We begin with the raw amino-acid sequence, 65 residues long: Large ribosomal subunit protein bL35 (65 aa).

A disordered region spans residues 1-26; it reads MPKIKTLRSAAKRFKKTESGKFKRKQ.

It belongs to the bacterial ribosomal protein bL35 family.

The chain is Large ribosomal subunit protein bL35 from Buchnera aphidicola subsp. Baizongia pistaciae (strain Bp).